Here is a 340-residue protein sequence, read N- to C-terminus: N-acetyl-gamma-glutamyl-phosphate reductase (340 aa).

Cysteine 147 is an active-site residue.

The protein belongs to the NAGSA dehydrogenase family. Type 1 subfamily.

The protein resides in the cytoplasm. The catalysed reaction is N-acetyl-L-glutamate 5-semialdehyde + phosphate + NADP(+) = N-acetyl-L-glutamyl 5-phosphate + NADPH + H(+). The protein operates within amino-acid biosynthesis; L-arginine biosynthesis; N(2)-acetyl-L-ornithine from L-glutamate: step 3/4. Catalyzes the NADPH-dependent reduction of N-acetyl-5-glutamyl phosphate to yield N-acetyl-L-glutamate 5-semialdehyde. This Lactococcus lactis subsp. lactis (strain IL1403) (Streptococcus lactis) protein is N-acetyl-gamma-glutamyl-phosphate reductase.